Here is a 341-residue protein sequence, read N- to C-terminus: Phosphoribosylformylglycinamidine cyclo-ligase (341 aa).

Belongs to the AIR synthase family.

It is found in the cytoplasm. It carries out the reaction 2-formamido-N(1)-(5-O-phospho-beta-D-ribosyl)acetamidine + ATP = 5-amino-1-(5-phospho-beta-D-ribosyl)imidazole + ADP + phosphate + H(+). The protein operates within purine metabolism; IMP biosynthesis via de novo pathway; 5-amino-1-(5-phospho-D-ribosyl)imidazole from N(2)-formyl-N(1)-(5-phospho-D-ribosyl)glycinamide: step 2/2. The polypeptide is Phosphoribosylformylglycinamidine cyclo-ligase (Synechocystis sp. (strain ATCC 27184 / PCC 6803 / Kazusa)).